The sequence spans 104 residues: Pyrimidine/purine nucleoside phosphorylase (104 aa).

It belongs to the nucleoside phosphorylase PpnP family.

It carries out the reaction a purine D-ribonucleoside + phosphate = a purine nucleobase + alpha-D-ribose 1-phosphate. The catalysed reaction is adenosine + phosphate = alpha-D-ribose 1-phosphate + adenine. It catalyses the reaction cytidine + phosphate = cytosine + alpha-D-ribose 1-phosphate. The enzyme catalyses guanosine + phosphate = alpha-D-ribose 1-phosphate + guanine. It carries out the reaction inosine + phosphate = alpha-D-ribose 1-phosphate + hypoxanthine. The catalysed reaction is thymidine + phosphate = 2-deoxy-alpha-D-ribose 1-phosphate + thymine. It catalyses the reaction uridine + phosphate = alpha-D-ribose 1-phosphate + uracil. The enzyme catalyses xanthosine + phosphate = alpha-D-ribose 1-phosphate + xanthine. Catalyzes the phosphorolysis of diverse nucleosides, yielding D-ribose 1-phosphate and the respective free bases. Can use uridine, adenosine, guanosine, cytidine, thymidine, inosine and xanthosine as substrates. Also catalyzes the reverse reactions. The polypeptide is Pyrimidine/purine nucleoside phosphorylase (Hydrogenovibrio crunogenus (strain DSM 25203 / XCL-2) (Thiomicrospira crunogena)).